The sequence spans 312 residues: Pantothenate kinase (312 aa).

ATP is bound at residue 97 to 104; that stretch reads GSVAVGKS.

The protein belongs to the prokaryotic pantothenate kinase family.

The protein resides in the cytoplasm. The enzyme catalyses (R)-pantothenate + ATP = (R)-4'-phosphopantothenate + ADP + H(+). It participates in cofactor biosynthesis; coenzyme A biosynthesis; CoA from (R)-pantothenate: step 1/5. This is Pantothenate kinase from Mycolicibacterium gilvum (strain PYR-GCK) (Mycobacterium gilvum (strain PYR-GCK)).